Here is a 192-residue protein sequence, read N- to C-terminus: Phosphoheptose isomerase (192 aa).

One can recognise an SIS domain in the interval 34–192 (VVDAYKAGNK…VERELFVKGK (159 aa)). Residue 49–51 (NGG) coordinates substrate. Positions 58 and 62 each coordinate Zn(2+). Substrate contacts are provided by residues Glu-62, 91–92 (ND), 117–119 (STS), Ser-122, and Gln-169. Gln-169 and His-177 together coordinate Zn(2+).

The protein belongs to the SIS family. GmhA subfamily. In terms of assembly, homotetramer. Zn(2+) serves as cofactor.

The protein resides in the cytoplasm. It catalyses the reaction 2 D-sedoheptulose 7-phosphate = D-glycero-alpha-D-manno-heptose 7-phosphate + D-glycero-beta-D-manno-heptose 7-phosphate. Its pathway is carbohydrate biosynthesis; D-glycero-D-manno-heptose 7-phosphate biosynthesis; D-glycero-alpha-D-manno-heptose 7-phosphate and D-glycero-beta-D-manno-heptose 7-phosphate from sedoheptulose 7-phosphate: step 1/1. Catalyzes the isomerization of sedoheptulose 7-phosphate in D-glycero-D-manno-heptose 7-phosphate. This is Phosphoheptose isomerase from Citrifermentans bemidjiense (strain ATCC BAA-1014 / DSM 16622 / JCM 12645 / Bem) (Geobacter bemidjiensis).